We begin with the raw amino-acid sequence, 95 residues long: MTKSELIERIVTHQGQLSSKDVELAIKTMLEQMSQALATGDRIEIRGFGSFSLHYRAPRVGRNPKTGQSVRLDGKFVPHFKPGKELRDRVNEDES.

Residues 59–95 are disordered; the sequence is RVGRNPKTGQSVRLDGKFVPHFKPGKELRDRVNEDES. The segment covering 72–95 has biased composition (basic and acidic residues); the sequence is LDGKFVPHFKPGKELRDRVNEDES.

This sequence belongs to the bacterial histone-like protein family. In terms of assembly, heterodimer of an alpha and a beta chain.

Functionally, this protein is one of the two subunits of integration host factor, a specific DNA-binding protein that functions in genetic recombination as well as in transcriptional and translational control. The protein is Integration host factor subunit beta of Ectopseudomonas mendocina (strain ymp) (Pseudomonas mendocina).